Here is a 771-residue protein sequence, read N- to C-terminus: Endoplasmin homolog (771 aa).

A signal peptide spans 1–24 (MANSSLLRVVLVALLLLGSVTVSA). ATP contacts are provided by N63, D109, and F160. Residue N63 is glycosylated (N-linked (GlcNAc...) asparagine). The segment at 253–282 (TAATPEPAAEEGSLDEGAVEEDPDKEGDTQ) is disordered. Acidic residues predominate over residues 260–277 (AAEEGSLDEGAVEEDPDK). 2 N-linked (GlcNAc...) asparagine glycosylation sites follow: N306 and N402. The interval 727 to 771 (ADDSLLPPDDAEYTVSDTEAEEEEEQPKVDANADEEAEAVGEDDL) is disordered. Acidic residues predominate over residues 758-771 (NADEEAEAVGEDDL). Residues 768–771 (EDDL) carry the Prevents secretion from ER motif.

It belongs to the heat shock protein 90 family. Homotetramer.

Its subcellular location is the endoplasmic reticulum. Molecular chaperone that functions in the processing and transport of secreted proteins. Required for the synthesis of lipophosphoglycan (LPG), a cell surface glycoconjugate. Necessary for the attachment of the galactosyl residue to the mannose within the phosphoglycan repeats of the nascent LPG chain. Also required for addition of phosphoglycan to acid phosphatase. Not required for normal growth. Has ATPase activity. Binds heparin with micromolar affinity which may facilitate infection of host cells. The polypeptide is Endoplasmin homolog (Leishmania infantum).